We begin with the raw amino-acid sequence, 289 residues long: Glycine--tRNA ligase alpha subunit (289 aa).

It belongs to the class-II aminoacyl-tRNA synthetase family. Tetramer of two alpha and two beta subunits.

It localises to the cytoplasm. It catalyses the reaction tRNA(Gly) + glycine + ATP = glycyl-tRNA(Gly) + AMP + diphosphate. The sequence is that of Glycine--tRNA ligase alpha subunit from Rickettsia typhi (strain ATCC VR-144 / Wilmington).